Consider the following 683-residue polypeptide: Dixin (683 aa).

Leu2 carries the N-myristoyl glycine lipid modification. In terms of domain architecture, Calponin-homology (CH) spans 20 to 127 (EQQLQAYVAW…LVLALAAHFK (108 aa)). The segment at 127–300 (KPGSSRTVNQ…LEKEMEEAKK (174 aa)) is actin-binding. Position 186 is a phosphoserine (Ser186). Positions 207 to 235 (GQQRSPSESSCSSLTSPSPIHSAKSESII) are disordered. Positions 211–228 (SPSESSCSSLTSPSPIHS) are enriched in low complexity. Ser231 is subject to Phosphoserine. Residues 279-452 (SWEEQLLEQQ…EALRKLSDVS (174 aa)) adopt a coiled-coil conformation. Over residues 482–492 (NYNSHNSQSNG) the composition is skewed to polar residues. 2 disordered regions span residues 482–509 (NYNS…SNRG) and 556–594 (TQKK…QSSP). The residue at position 590 (Ser590) is a Phosphoserine. The DIX domain maps to 600–680 (CTKVLYFTDR…KIVAWVEEDH (81 aa)).

The protein belongs to the DIXDC1 family. Isoform 1 but not isoform 2 binds filamentous actin. Interacts with the complex composed of DVL2 and Rac. Interacts with AXIN1; competes with MAP3K1. Interacts with MAP3K4 preventing MAP3K4 interaction with AXIN1. Directly interacts (via DIX domain) with DVL2 (via DIX domain). Interacts with gamma-tubulin. In terms of processing, phosphorylated on tyrosine and serine residues. Polyubiquitinated, leading to its proteasomal degradation. WNT3A signaling increases DIXDC1 protein levels by inhibiting its ubiquitination and subsequent degradation. In terms of tissue distribution, ubiquitously expressed with higher expression in cardiac and skeletal muscles.

The protein localises to the cell junction. It is found in the focal adhesion. It localises to the cytoplasm. Its subcellular location is the cytoskeleton. The protein resides in the stress fiber. In terms of biological role, positive effector of the Wnt signaling pathway; activates WNT3A signaling via DVL2. Regulates JNK activation by AXIN1 and DVL2. The chain is Dixin (DIXDC1) from Homo sapiens (Human).